A 354-amino-acid polypeptide reads, in one-letter code: Selenide, water dikinase (354 aa).

Residue Sec21 is part of the active site. Sec21 is a non-standard amino acid (selenocysteine). ATP-binding positions include Lys24 and 51-53 (TSD). Mg(2+) is bound at residue Asp54. ATP-binding positions include Asp71, Asp94, and 141 to 143 (GHT). Asp94 provides a ligand contact to Mg(2+). Asp229 serves as a coordination point for Mg(2+).

It belongs to the selenophosphate synthase 1 family. Class I subfamily. As to quaternary structure, homodimer. Mg(2+) is required as a cofactor.

It catalyses the reaction hydrogenselenide + ATP + H2O = selenophosphate + AMP + phosphate + 2 H(+). In terms of biological role, synthesizes selenophosphate from selenide and ATP. This chain is Selenide, water dikinase, found in Treponema denticola (strain ATCC 35405 / DSM 14222 / CIP 103919 / JCM 8153 / KCTC 15104).